The sequence spans 242 residues: Putative prolyl 4-hydroxylase (242 aa).

The region spanning 128-238 is the Fe2OG dioxygenase domain; sequence NAEDLQVVRY…KWIANLWFRE (111 aa).

It belongs to the P4HA family. The cofactor is Fe cation. L-ascorbate is required as a cofactor.

It is found in the virion. The enzyme catalyses L-prolyl-[collagen] + 2-oxoglutarate + O2 = trans-4-hydroxy-L-prolyl-[collagen] + succinate + CO2. May catalyze the post-translational formation of 4-hydroxyproline in -Xaa-Pro-Gly- sequences in the 6 collagen-like proteins of Mimivirus. The polypeptide is Putative prolyl 4-hydroxylase (Acanthamoeba polyphaga mimivirus (APMV)).